The sequence spans 324 residues: Phosphate transport system permease protein PstC 2 (324 aa).

Transmembrane regions (helical) follow at residues alanine 30–valine 50, leucine 90–leucine 110, methionine 125–leucine 145, alanine 174–valine 194, valine 237–isoleucine 257, and proline 290–valine 310. The ABC transmembrane type-1 domain occupies phenylalanine 85–alanine 314.

This sequence belongs to the binding-protein-dependent transport system permease family. CysTW subfamily.

The protein localises to the cell membrane. Part of the binding-protein-dependent transport system for phosphate; probably responsible for the translocation of the substrate across the membrane. The sequence is that of Phosphate transport system permease protein PstC 2 (pstC2) from Mycobacterium bovis (strain ATCC BAA-935 / AF2122/97).